A 92-amino-acid polypeptide reads, in one-letter code: MAHTKAGGSTRNGRDSRGQRLGIKLGDGQFCTAGSIIFRQRGTKIFPGVNAGRGNDDTIYALITGYVKFERRRNRVYASVYPTRVQNSTSAE.

Positions Met-1–Gly-22 are disordered.

It belongs to the bacterial ribosomal protein bL27 family.

In Mycoplasmopsis agalactiae (strain NCTC 10123 / CIP 59.7 / PG2) (Mycoplasma agalactiae), this protein is Large ribosomal subunit protein bL27.